A 217-amino-acid chain; its full sequence is Proteasome subunit beta (217 aa).

A propeptide spans 1-14 (removed in mature form; by autocatalysis); that stretch reads MIANNDQYKEYMKG. T15 serves as the catalytic Nucleophile.

The protein belongs to the peptidase T1B family. In terms of assembly, the 20S proteasome core is composed of 14 alpha and 14 beta subunits that assemble into four stacked heptameric rings, resulting in a barrel-shaped structure. The two inner rings, each composed of seven catalytic beta subunits, are sandwiched by two outer rings, each composed of seven alpha subunits. The catalytic chamber with the active sites is on the inside of the barrel. Has a gated structure, the ends of the cylinder being occluded by the N-termini of the alpha-subunits. Is capped at one or both ends by the proteasome regulatory ATPase, PAN.

It is found in the cytoplasm. The enzyme catalyses Cleavage of peptide bonds with very broad specificity.. The formation of the proteasomal ATPase PAN-20S proteasome complex, via the docking of the C-termini of PAN into the intersubunit pockets in the alpha-rings, triggers opening of the gate for substrate entry. Interconversion between the open-gate and close-gate conformations leads to a dynamic regulation of the 20S proteasome proteolysis activity. Component of the proteasome core, a large protease complex with broad specificity involved in protein degradation. The chain is Proteasome subunit beta from Methanococcus aeolicus (strain ATCC BAA-1280 / DSM 17508 / OCM 812 / Nankai-3).